The following is a 232-amino-acid chain: Large ribosomal subunit protein uL1 (232 aa).

It belongs to the universal ribosomal protein uL1 family. Part of the 50S ribosomal subunit.

Functionally, binds directly to 23S rRNA. The L1 stalk is quite mobile in the ribosome, and is involved in E site tRNA release. Protein L1 is also a translational repressor protein, it controls the translation of the L11 operon by binding to its mRNA. In Thermosipho melanesiensis (strain DSM 12029 / CIP 104789 / BI429), this protein is Large ribosomal subunit protein uL1.